Consider the following 316-residue polypeptide: Fe-S cluster assembly protein DRE2 (316 aa).

The interval 4–156 (SMPVATTVAA…KPQHVASTSV (153 aa)) is N-terminal SAM-like domain. The linker stretch occupies residues 157-202 (PLKSRQPGALLNRKKTDPAKKQALWALSSPSTPKIDPEALLTAEDK). [2Fe-2S] cluster contacts are provided by Cys-209, Cys-223, Cys-226, and Cys-228. Residues 209–228 (CEPVRSSAPRRKKACKSCSC) are fe-S binding site A. Residues Cys-279, Cys-282, Cys-290, and Cys-293 each coordinate [4Fe-4S] cluster. Short sequence motifs (cx2C motif) lie at residues 279 to 282 (CGSC) and 290 to 293 (CAGC). Residues 279–293 (CGSCFLGDAFRCAGC) are fe-S binding site B.

The protein belongs to the anamorsin family. In terms of assembly, monomer. Interacts with TAH18. Interacts with MIA40. It depends on [2Fe-2S] cluster as a cofactor. Requires [4Fe-4S] cluster as cofactor.

The protein localises to the cytoplasm. Its subcellular location is the mitochondrion intermembrane space. Component of the cytosolic iron-sulfur (Fe-S) protein assembly (CIA) machinery required for the maturation of extramitochondrial Fe-S proteins. Part of an electron transfer chain functioning in an early step of cytosolic Fe-S biogenesis, facilitating the de novo assembly of a [4Fe-4S] cluster on the scaffold complex CFD1-NBP35. Electrons are transferred to DRE2 from NADPH via the FAD- and FMN-containing protein TAH18. TAH18-DRE2 are also required for the assembly of the diferric tyrosyl radical cofactor of ribonucleotide reductase (RNR), probably by providing electrons for reduction during radical cofactor maturation in the catalytic small subunit RNR2. This Laccaria bicolor (strain S238N-H82 / ATCC MYA-4686) (Bicoloured deceiver) protein is Fe-S cluster assembly protein DRE2.